The primary structure comprises 142 residues: Hemoglobin subunit alpha (142 aa).

Position 1 is an N-acetylserine (S1). The region spanning 1-142 is the Globin domain; sequence SLTDKDKATV…VSLALSERYR (142 aa). Residue H59 coordinates O2. Residue H88 coordinates heme b.

This sequence belongs to the globin family. As to quaternary structure, hb1 is a heterotetramer of two alpha chains and two beta-1 chains. Hb2 is a heterotetramer of two alpha chains and two beta-2 chains. In terms of tissue distribution, red blood cells.

In terms of biological role, involved in oxygen transport from gills to the various peripheral tissues. This is Hemoglobin subunit alpha (hba) from Pseudaphritis urvillii (Congolli).